The chain runs to 298 residues: Inosose dehydratase (298 aa).

This sequence belongs to the IolE/MocC family. Glutathione is required as a cofactor. Requires Co(2+) as cofactor. It depends on Mn(2+) as a cofactor.

The catalysed reaction is scyllo-inosose = 3D-3,5/4-trihydroxycyclohexane-1,2-dione + H2O. The protein operates within polyol metabolism; myo-inositol degradation into acetyl-CoA; acetyl-CoA from myo-inositol: step 2/7. In terms of biological role, catalyzes the dehydration of inosose (2-keto-myo-inositol, 2KMI or 2,4,6/3,5-pentahydroxycyclohexanone) to 3D-(3,5/4)-trihydroxycyclohexane-1,2-dione (D-2,3-diketo-4-deoxy-epi-inositol). The chain is Inosose dehydratase from Lacticaseibacillus casei (Lactobacillus casei).